We begin with the raw amino-acid sequence, 387 residues long: Cyclin-B1-4 (387 aa).

The disordered stretch occupies residues 1–29 (MASSRVSDLPHQRGIAGEIKPKNVAGHGR).

This sequence belongs to the cyclin family. Cyclin AB subfamily.

This chain is Cyclin-B1-4 (CYCB1-4), found in Arabidopsis thaliana (Mouse-ear cress).